Reading from the N-terminus, the 145-residue chain is Putative pre-16S rRNA nuclease (145 aa).

The protein belongs to the YqgF nuclease family.

It is found in the cytoplasm. Functionally, could be a nuclease involved in processing of the 5'-end of pre-16S rRNA. This is Putative pre-16S rRNA nuclease from Pseudomonas fluorescens (strain ATCC BAA-477 / NRRL B-23932 / Pf-5).